Consider the following 162-residue polypeptide: Shikimate kinase (162 aa).

An ATP-binding site is contributed by 11 to 16 (GSGKSS). S15 serves as a coordination point for Mg(2+). Substrate-binding residues include D33, R57, and G80. R116 is a binding site for ATP. Position 132 (R132) interacts with substrate.

This sequence belongs to the shikimate kinase family. In terms of assembly, monomer. It depends on Mg(2+) as a cofactor.

The protein resides in the cytoplasm. It carries out the reaction shikimate + ATP = 3-phosphoshikimate + ADP + H(+). Its pathway is metabolic intermediate biosynthesis; chorismate biosynthesis; chorismate from D-erythrose 4-phosphate and phosphoenolpyruvate: step 5/7. Catalyzes the specific phosphorylation of the 3-hydroxyl group of shikimic acid using ATP as a cosubstrate. This Helicobacter pylori (strain G27) protein is Shikimate kinase.